The following is a 373-amino-acid chain: Pollen allergen KBG 31 (373 aa).

Residues 1–28 (MDKANGAYKTALKAASAVAPAEKFPVFQ) form the signal peptide.

The protein belongs to the Poa p IX/Phl p VI allergen family. Pollen.

The polypeptide is Pollen allergen KBG 31 (Poa pratensis (Kentucky bluegrass)).